A 111-amino-acid chain; its full sequence is Ribonuclease P protein component 1 (111 aa).

This sequence belongs to the eukaryotic/archaeal RNase P protein component 1 family. In terms of assembly, consists of a catalytic RNA component and at least 4-5 protein subunits.

It is found in the cytoplasm. It catalyses the reaction Endonucleolytic cleavage of RNA, removing 5'-extranucleotides from tRNA precursor.. In terms of biological role, part of ribonuclease P, a protein complex that generates mature tRNA molecules by cleaving their 5'-ends. The polypeptide is Ribonuclease P protein component 1 (Hyperthermus butylicus (strain DSM 5456 / JCM 9403 / PLM1-5)).